An 80-amino-acid polypeptide reads, in one-letter code: Exodeoxyribonuclease 7 small subunit (80 aa).

It belongs to the XseB family. In terms of assembly, heterooligomer composed of large and small subunits.

The protein localises to the cytoplasm. The enzyme catalyses Exonucleolytic cleavage in either 5'- to 3'- or 3'- to 5'-direction to yield nucleoside 5'-phosphates.. Bidirectionally degrades single-stranded DNA into large acid-insoluble oligonucleotides, which are then degraded further into small acid-soluble oligonucleotides. This chain is Exodeoxyribonuclease 7 small subunit, found in Shigella sonnei (strain Ss046).